Reading from the N-terminus, the 504-residue chain is ATP synthase subunit alpha, chloroplastic (504 aa).

170–177 (GDRQTGKT) lines the ATP pocket.

It belongs to the ATPase alpha/beta chains family. F-type ATPases have 2 components, CF(1) - the catalytic core - and CF(0) - the membrane proton channel. CF(1) has five subunits: alpha(3), beta(3), gamma(1), delta(1), epsilon(1). CF(0) has four main subunits: a, b, b' and c.

Its subcellular location is the plastid. It is found in the chloroplast thylakoid membrane. It carries out the reaction ATP + H2O + 4 H(+)(in) = ADP + phosphate + 5 H(+)(out). Produces ATP from ADP in the presence of a proton gradient across the membrane. The alpha chain is a regulatory subunit. This is ATP synthase subunit alpha, chloroplastic from Triticum aestivum (Wheat).